Here is a 196-residue protein sequence, read N- to C-terminus: Peptidyl-tRNA hydrolase (196 aa).

Residue H15 coordinates tRNA. The Proton acceptor role is filled by H20. The tRNA site is built by Y66, N68, and N114.

This sequence belongs to the PTH family. Monomer.

The protein localises to the cytoplasm. The catalysed reaction is an N-acyl-L-alpha-aminoacyl-tRNA + H2O = an N-acyl-L-amino acid + a tRNA + H(+). In terms of biological role, hydrolyzes ribosome-free peptidyl-tRNAs (with 1 or more amino acids incorporated), which drop off the ribosome during protein synthesis, or as a result of ribosome stalling. Its function is as follows. Catalyzes the release of premature peptidyl moieties from peptidyl-tRNA molecules trapped in stalled 50S ribosomal subunits, and thus maintains levels of free tRNAs and 50S ribosomes. This is Peptidyl-tRNA hydrolase from Polynucleobacter asymbioticus (strain DSM 18221 / CIP 109841 / QLW-P1DMWA-1) (Polynucleobacter necessarius subsp. asymbioticus).